Consider the following 87-residue polypeptide: Mitochondrial import inner membrane translocase subunit TIM8 (87 aa).

The Twin CX3C motif motif lies at cysteine 44–cysteine 68. Intrachain disulfides connect cysteine 44/cysteine 68 and cysteine 48/cysteine 64.

The protein belongs to the small Tim family. Heterohexamer; composed of 3 copies of TIM8 and 3 copies of TIM13, named soluble 70 kDa complex. Associates with the TIM22 complex, whose core is composed of TIM18, TIM22 and TIM54. Interacts with the transmembrane regions of multi-pass transmembrane proteins in transit.

The protein resides in the mitochondrion inner membrane. It is found in the mitochondrion intermembrane space. Mitochondrial intermembrane chaperone that participates in the import and insertion of some multi-pass transmembrane proteins into the mitochondrial inner membrane. Also required for the transfer of beta-barrel precursors from the TOM complex to the sorting and assembly machinery (SAM complex) of the outer membrane. Acts as a chaperone-like protein that protects the hydrophobic precursors from aggregation and guide them through the mitochondrial intermembrane space. The TIM8-TIM13 complex is non essential and only mediates the import of few proteins under precise conditions, while the predominant TIM9-TIM10 70 kDa complex is crucial and mediates the import of much more proteins. Strictly required for import of TIM23 in some conditions, when a low membrane potential exists in the mitochondria. The chain is Mitochondrial import inner membrane translocase subunit TIM8 (TIM8) from Saccharomyces cerevisiae (strain ATCC 204508 / S288c) (Baker's yeast).